The sequence spans 390 residues: Galactokinase (390 aa).

Position 33–36 (33–36 (EHTD)) interacts with substrate. ATP contacts are provided by residues Ser67 and 124–130 (GAGLSSS). Ser130 and Glu162 together coordinate Mg(2+). Asp174 (proton acceptor) is an active-site residue. Residue Tyr224 coordinates substrate.

Belongs to the GHMP kinase family. GalK subfamily.

It is found in the cytoplasm. The catalysed reaction is alpha-D-galactose + ATP = alpha-D-galactose 1-phosphate + ADP + H(+). It participates in carbohydrate metabolism; galactose metabolism. Catalyzes the transfer of the gamma-phosphate of ATP to D-galactose to form alpha-D-galactose-1-phosphate (Gal-1-P). The protein is Galactokinase of Exiguobacterium sibiricum (strain DSM 17290 / CCUG 55495 / CIP 109462 / JCM 13490 / 255-15).